Here is a 340-residue protein sequence, read N- to C-terminus: Heat-inducible transcription repressor HrcA (340 aa).

This sequence belongs to the HrcA family.

Its function is as follows. Negative regulator of class I heat shock genes (grpE-dnaK-dnaJ and groELS operons). Prevents heat-shock induction of these operons. The chain is Heat-inducible transcription repressor HrcA from Chromobacterium violaceum (strain ATCC 12472 / DSM 30191 / JCM 1249 / CCUG 213 / NBRC 12614 / NCIMB 9131 / NCTC 9757 / MK).